The sequence spans 381 residues: Alpha-methylacyl-CoA racemase (381 aa).

Substrate-binding positions include arginine 36 and 54–57; that span reads LDLK. At lysine 57 the chain carries N6-acetyllysine. Lysine 86 and lysine 100 each carry N6-acetyllysine; alternate. N6-succinyllysine; alternate is present on residues lysine 86 and lysine 100. At lysine 117 the chain carries N6-acetyllysine. Substrate is bound at residue 120 to 125; the sequence is GHDINY. Residue histidine 121 is the Proton acceptor of the active site. The active-site Proton donor is aspartate 151. At lysine 267 the chain carries N6-succinyllysine. Positions 316–344 are disordered; it reads TDGEQLPSPRPAPLLSRTPAVPSAKRDPS. The Microbody targeting signal motif lies at 379–381; the sequence is ANL.

Belongs to the CoA-transferase III family. Monomer.

The protein localises to the peroxisome. Its subcellular location is the mitochondrion. It catalyses the reaction a (2S)-2-methylacyl-CoA = a (2R)-2-methylacyl-CoA. The enzyme catalyses (25R)-3alpha,7alpha,12alpha-trihydroxy-5beta-cholestan-26-oyl-CoA = (25S)-3alpha,7alpha,12alpha-trihydroxy-5beta-cholestan-26-oyl-CoA. It carries out the reaction (2R,6)-dimethylheptanoyl-CoA = (2S,6)-dimethylheptanoyl-CoA. It functions in the pathway lipid metabolism; bile acid biosynthesis. The protein operates within lipid metabolism; fatty acid metabolism. Functionally, catalyzes the interconversion of (R)- and (S)-stereoisomers of alpha-methyl-branched-chain fatty acyl-CoA esters. Acts only on coenzyme A thioesters, not on free fatty acids, and accepts as substrates a wide range of alpha-methylacyl-CoAs, including pristanoyl-CoA, trihydroxycoprostanoyl-CoA (an intermediate in bile acid synthesis), and arylpropionic acids like the anti-inflammatory drug ibuprofen (2-(4-isobutylphenyl)propionic acid) but neither 3-methyl-branched nor linear-chain acyl-CoAs. The protein is Alpha-methylacyl-CoA racemase (Amacr) of Mus musculus (Mouse).